The chain runs to 123 residues: Molluscan insulin-related peptide 1 (123 aa).

Positions 1–31 (MAGVRLVFTKAFMVTVLLTLLLNIGVKPAEG) are cleaved as a signal peptide. Glutamine 32 is modified (pyrrolidone carboxylic acid). 3 disulfides stabilise this stretch: cysteine 48–cysteine 109, cysteine 60–cysteine 122, and cysteine 108–cysteine 113. Residues 68 to 69 (MV) constitute a propeptide that is removed on maturation. Glutamine 99 is subject to Pyrrolidone carboxylic acid.

The protein belongs to the insulin family. In terms of assembly, heterodimer of a B chain and an A chain linked by two disulfide bonds. Expressed in the cerebral light-green cells which are giant neuroendocrines cells involved in the control of growth.

Its subcellular location is the cytoplasmic vesicle. The protein resides in the secretory vesicle. In Lymnaea stagnalis (Great pond snail), this protein is Molluscan insulin-related peptide 1.